Here is a 108-residue protein sequence, read N- to C-terminus: AVELTQTPASVEAAVGGTVTIKCQASQBIYSYLSWYQQKPGQPPKLLIYKASTLASGVSSRFKGSGSGTEFTLTISDLZCADAATYYCQTYSYSSTYFGGGTEVVVKG.

The framework-1 stretch occupies residues 1–23; that stretch reads AVELTQTPASVEAAVGGTVTIKC. The complementarity-determining-1 stretch occupies residues 24–34; sequence QASQBIYSYLS. A framework-2 region spans residues 35–49; sequence WYQQKPGQPPKLLIY. The segment at 50 to 56 is complementarity-determining-2; that stretch reads KASTLAS. A framework-3 region spans residues 57 to 88; it reads GVSSRFKGSGSGTEFTLTISDLZCADAATYYC. Positions 89 to 97 are complementarity-determining-3; it reads QTYSYSSTY. The tract at residues 98–107 is framework-4; sequence FGGGTEVVVK.

In Oryctolagus cuniculus (Rabbit), this protein is Ig kappa chain V region K-25.